A 206-amino-acid chain; its full sequence is Ribonuclease HII (206 aa).

The RNase H type-2 domain occupies 19–206 (ALIAGVDEVG…GPVKRALGIE (188 aa)). Positions 25, 26, and 117 each coordinate a divalent metal cation.

This sequence belongs to the RNase HII family. Mn(2+) is required as a cofactor. It depends on Mg(2+) as a cofactor.

It localises to the cytoplasm. The catalysed reaction is Endonucleolytic cleavage to 5'-phosphomonoester.. Endonuclease that specifically degrades the RNA of RNA-DNA hybrids. This is Ribonuclease HII from Vibrio cholerae serotype O1 (strain M66-2).